Consider the following 422-residue polypeptide: MQHPKPFCAPAAPQEGFSPQSLEGAEVLGNQPAPTCAEPPPAMGSLNLYHPPDPEKEVFPAPPAGFQMAPCGCFFDPRIYRIEWTTPDLGQSALYKLAASSGGPAGVPSAPGSYLLEPQPYLKAPGLPPYPHYQQAPGGPQFLLPYFPPEGPGPEALGFVGDAGPAAFVELPLPPLEEGPAPLPPPPPKENKPPPVLITLPAEPTLPPDAYSHLQGHLGHFPGPEPLAFPVKELQGSGARPGVPLYPPGLSELKVAEVKEGALLGAGKAKAPKTARALALPDKVLLEDAMKLFDCLPGASEPEGTLCEVPGPALPDSSGGNSADDIRSLCLPEELLSFDYSVPEILDTVSNVDYFFNFKALDEEQPPHPGPPATNTPAPILSGKRKASTAKKGKPGRKARQPAGPASATPPGPREDLGATPH.

3 disordered regions span residues 1-35, 306-325, and 363-422; these read MQHPKPFCAPAAPQEGFSPQSLEGAEVLGNQPAPT, LCEVPGPALPDSSGGNSADD, and EEQP…ATPH. A compositionally biased stretch (basic residues) spans 383-400; sequence GKRKASTAKKGKPGRKAR. Basic and acidic residues predominate over residues 413-422; sequence PREDLGATPH.

The protein is Proline-rich protein 22 (PRR22) of Homo sapiens (Human).